The following is a 374-amino-acid chain: CC-adding tRNA nucleotidyltransferase (374 aa).

Residue 39-42 participates in CTP binding; that stretch reads GAVR. Mg(2+) is bound by residues D52 and D54. Residues 126–127, N131, 171–180, and R209 each bind CTP; these read RD and DASRLVRAAR.

Belongs to the tRNA nucleotidyltransferase/poly(A) polymerase family. Mg(2+) serves as cofactor.

The enzyme catalyses a tRNA precursor + 2 CTP = a tRNA with a 3' CC end + 2 diphosphate. In terms of biological role, tRNA nucleotidyltransferase involved in the synthesis of the tRNA CCA terminus. Adds the two cytidine residues to tRNA. The polypeptide is CC-adding tRNA nucleotidyltransferase (Deinococcus radiodurans (strain ATCC 13939 / DSM 20539 / JCM 16871 / CCUG 27074 / LMG 4051 / NBRC 15346 / NCIMB 9279 / VKM B-1422 / R1)).